A 497-amino-acid polypeptide reads, in one-letter code: Cytochrome P450 2D6 (497 aa).

Substrate is bound at residue D301. C443 contacts heme.

This sequence belongs to the cytochrome P450 family. Heme is required as a cofactor.

The protein localises to the endoplasmic reticulum membrane. The protein resides in the microsome membrane. It catalyses the reaction (5Z,8Z,11Z,14Z)-eicosatetraenoate + reduced [NADPH--hemoprotein reductase] + O2 = (8R,9S)-epoxy-(5Z,11Z,14Z)-eicosatrienoate + oxidized [NADPH--hemoprotein reductase] + H2O + H(+). The enzyme catalyses (5Z,8Z,11Z,14Z)-eicosatetraenoate + reduced [NADPH--hemoprotein reductase] + O2 = (11R,12S)-epoxy-(5Z,8Z,14Z)-eicosatrienoate + oxidized [NADPH--hemoprotein reductase] + H2O + H(+). The catalysed reaction is (5Z,8Z,11Z,14Z)-eicosatetraenoate + reduced [NADPH--hemoprotein reductase] + O2 = (14S,15R)-epoxy-(5Z,8Z,11Z)-eicosatrienoate + oxidized [NADPH--hemoprotein reductase] + H2O + H(+). It carries out the reaction N-(5Z,8Z,11Z,14Z-eicosatetraenoyl)-ethanolamine + reduced [NADPH--hemoprotein reductase] + O2 = N-(8,9-epoxy-5Z,11Z,14Z-eicosatrienoyl)-ethanolamine + oxidized [NADPH--hemoprotein reductase] + H2O + H(+). It catalyses the reaction N-(5Z,8Z,11Z,14Z-eicosatetraenoyl)-ethanolamine + reduced [NADPH--hemoprotein reductase] + O2 = N-(11,12-epoxy-5Z,8Z,14Z-eicosatrienoyl)-ethanolamine + oxidized [NADPH--hemoprotein reductase] + H2O + H(+). The enzyme catalyses N-(5Z,8Z,11Z,14Z-eicosatetraenoyl)-ethanolamine + reduced [NADPH--hemoprotein reductase] + O2 = N-(14,15-epoxy-5Z,8Z,11Z-eicosatrienoyl)-ethanolamine + oxidized [NADPH--hemoprotein reductase] + H2O + H(+). The catalysed reaction is N-(5Z,8Z,11Z,14Z-eicosatetraenoyl)-ethanolamine + reduced [NADPH--hemoprotein reductase] + O2 = N-(20-hydroxy-5Z,8Z,11Z,14Z-eicosatetraenoyl)-ethanolamine + oxidized [NADPH--hemoprotein reductase] + H2O + H(+). It carries out the reaction (5Z,8Z,11Z,14Z,17Z)-eicosapentaenoate + reduced [NADPH--hemoprotein reductase] + O2 = (17S,18R)-epoxy-(5Z,8Z,11Z,14Z)-eicosatetraenoate + oxidized [NADPH--hemoprotein reductase] + H2O + H(+). It catalyses the reaction (4Z,7Z,10Z,13Z,16Z,19Z)-docosahexaenoate + reduced [NADPH--hemoprotein reductase] + O2 = (19R,20S)-epoxy-(4Z,7Z,10Z,13Z,16Z)-docosapentaenoate + oxidized [NADPH--hemoprotein reductase] + H2O + H(+). The enzyme catalyses (4Z,7Z,10Z,13Z,16Z,19Z)-docosahexaenoate + reduced [NADPH--hemoprotein reductase] + O2 = (19S,20R)-epoxy-(4Z,7Z,10Z,13Z,16Z)-docosapentaenoate + oxidized [NADPH--hemoprotein reductase] + H2O + H(+). The catalysed reaction is cholesterol + reduced [NADPH--hemoprotein reductase] + O2 = 25-hydroxycholesterol + oxidized [NADPH--hemoprotein reductase] + H2O + H(+). It carries out the reaction all-trans-retinol + reduced [NADPH--hemoprotein reductase] + O2 = all-trans-retinal + oxidized [NADPH--hemoprotein reductase] + 2 H2O + H(+). It functions in the pathway cofactor metabolism; retinol metabolism. It participates in lipid metabolism; fatty acid metabolism. Its pathway is steroid metabolism; cholesterol metabolism. Its function is as follows. A cytochrome P450 monooxygenase involved in the metabolism of fatty acids, steroids and retinoids. Mechanistically, uses molecular oxygen inserting one oxygen atom into a substrate, and reducing the second into a water molecule, with two electrons provided by NADPH via cytochrome P450 reductase (NADPH--hemoprotein reductase). Catalyzes the epoxidation of double bonds of polyunsaturated fatty acids (PUFA). Metabolizes endocannabinoid arachidonoylethanolamide (anandamide) to 20-hydroxyeicosatetraenoic acid ethanolamide (20-HETE-EA) and 8,9-, 11,12-, and 14,15-epoxyeicosatrienoic acid ethanolamides (EpETrE-EAs), potentially modulating endocannabinoid system signaling. Catalyzes the hydroxylation of carbon-hydrogen bonds. Metabolizes cholesterol toward 25-hydroxycholesterol, a physiological regulator of cellular cholesterol homeostasis. Catalyzes the oxidative transformations of all-trans retinol to all-trans retinal, a precursor for the active form all-trans-retinoic acid. Also involved in the oxidative metabolism of drugs such as antiarrhythmics, adrenoceptor antagonists, and tricyclic antidepressants. This Pan troglodytes (Chimpanzee) protein is Cytochrome P450 2D6 (CYP2D6).